A 623-amino-acid polypeptide reads, in one-letter code: V-type proton ATPase catalytic subunit A (623 aa).

Gly252–Thr259 provides a ligand contact to ATP.

The protein belongs to the ATPase alpha/beta chains family. As to quaternary structure, V-ATPase is a heteromultimeric enzyme composed of a peripheral catalytic V1 complex (main components: subunits A, B, C, D, E, and F) attached to an integral membrane V0 proton pore complex (main component: the proteolipid protein).

The enzyme catalyses ATP + H2O + 4 H(+)(in) = ADP + phosphate + 5 H(+)(out). Its function is as follows. Catalytic subunit of the peripheral V1 complex of vacuolar ATPase. V-ATPase vacuolar ATPase is responsible for acidifying a variety of intracellular compartments in eukaryotic cells. The protein is V-type proton ATPase catalytic subunit A of Vigna radiata var. radiata (Mung bean).